We begin with the raw amino-acid sequence, 175 residues long: Methylated-DNA--protein-cysteine methyltransferase (175 aa).

Residues tyrosine 115 and arginine 127 each coordinate DNA. The Nucleophile; methyl group acceptor role is filled by cysteine 144.

This sequence belongs to the MGMT family.

Its subcellular location is the nucleus. It carries out the reaction a 6-O-methyl-2'-deoxyguanosine in DNA + L-cysteinyl-[protein] = S-methyl-L-cysteinyl-[protein] + a 2'-deoxyguanosine in DNA. It catalyses the reaction a 4-O-methyl-thymidine in DNA + L-cysteinyl-[protein] = a thymidine in DNA + S-methyl-L-cysteinyl-[protein]. Involved in the cellular defense against the biological effects of O6-methylguanine (O6-MeG) and O4-methylthymine (O4-MeT) in DNA. Repairs the methylated nucleobase in DNA by stoichiometrically transferring the methyl group to a cysteine residue in the enzyme. This is a suicide reaction: the enzyme is irreversibly inactivated. This Candida albicans (strain SC5314 / ATCC MYA-2876) (Yeast) protein is Methylated-DNA--protein-cysteine methyltransferase (MGT1).